The sequence spans 211 residues: Uracil phosphoribosyltransferase (211 aa).

Residues Arg78, Arg103, and 130 to 138 contribute to the 5-phospho-alpha-D-ribose 1-diphosphate site; that span reads DPMLATGGT. Residues Ile195 and 200–202 contribute to the uracil site; that span reads GDA. Asp201 contacts 5-phospho-alpha-D-ribose 1-diphosphate.

The protein belongs to the UPRTase family. Mg(2+) is required as a cofactor.

The catalysed reaction is UMP + diphosphate = 5-phospho-alpha-D-ribose 1-diphosphate + uracil. It participates in pyrimidine metabolism; UMP biosynthesis via salvage pathway; UMP from uracil: step 1/1. Allosterically activated by GTP. Functionally, catalyzes the conversion of uracil and 5-phospho-alpha-D-ribose 1-diphosphate (PRPP) to UMP and diphosphate. This Arthrobacter sp. (strain FB24) protein is Uracil phosphoribosyltransferase.